The chain runs to 194 residues: Imidazole glycerol phosphate synthase subunit HisH (194 aa).

One can recognise a Glutamine amidotransferase type-1 domain in the interval 3–194; it reads RIAIVDLGIG…LILLRNFRRL (192 aa). Catalysis depends on Cys-74, which acts as the Nucleophile. Residues His-176 and Glu-178 contribute to the active site.

In terms of assembly, heterodimer of HisH and HisF.

Its subcellular location is the cytoplasm. The catalysed reaction is 5-[(5-phospho-1-deoxy-D-ribulos-1-ylimino)methylamino]-1-(5-phospho-beta-D-ribosyl)imidazole-4-carboxamide + L-glutamine = D-erythro-1-(imidazol-4-yl)glycerol 3-phosphate + 5-amino-1-(5-phospho-beta-D-ribosyl)imidazole-4-carboxamide + L-glutamate + H(+). It carries out the reaction L-glutamine + H2O = L-glutamate + NH4(+). The protein operates within amino-acid biosynthesis; L-histidine biosynthesis; L-histidine from 5-phospho-alpha-D-ribose 1-diphosphate: step 5/9. In terms of biological role, IGPS catalyzes the conversion of PRFAR and glutamine to IGP, AICAR and glutamate. The HisH subunit catalyzes the hydrolysis of glutamine to glutamate and ammonia as part of the synthesis of IGP and AICAR. The resulting ammonia molecule is channeled to the active site of HisF. The polypeptide is Imidazole glycerol phosphate synthase subunit HisH (Pyrococcus furiosus (strain ATCC 43587 / DSM 3638 / JCM 8422 / Vc1)).